The following is a 497-amino-acid chain: Serine/threonine-protein kinase 3 (497 aa).

Methionine 1 carries the post-translational modification N-acetylmethionine. Residues 1-20 are disordered; that stretch reads MEQPPASKSKLKKLSEDSLT. Serine 15 carries the phosphoserine modification. The Protein kinase domain occupies 27–278; the sequence is FDVLEKLGEG…ATQLLQHPFI (252 aa). Residues 33–41 and lysine 56 each bind ATP; that span reads LGEGSYGSV. A Phosphothreonine; by PKB/AKT1 modification is found at threonine 117. The active-site Proton acceptor is the aspartate 146. Asparagine 151 and aspartate 164 together coordinate Mg(2+). Threonine 180 is modified (phosphothreonine; by autocatalysis). The stretch at 287 to 328 forms a coiled coil; that stretch reads LRDLIAEAMEIKAKRHEEQQRELEEEEENSDEDELDSHTMVK. Disordered stretches follow at residues 301–343 and 368–394; these read RHEE…TSTM and NSEE…SPQV. The segment covering 309-321 has biased composition (acidic residues); sequence LEEEEENSDEDEL. Phosphoserine is present on serine 316. Over residues 326–343 the composition is skewed to polar residues; the sequence is MVKTSSESVGTMRATSTM. The residue at position 336 (threonine 336) is a Phosphothreonine. The stretch at 366–387 forms a coiled coil; that stretch reads VINSEEEEEEEEEEEEDGTMKR. Residues 369-382 are compositionally biased toward acidic residues; that stretch reads SEEEEEEEEEEEED. Residue threonine 384 is modified to Phosphothreonine. Threonine 390 carries the post-translational modification Phosphothreonine; by PKB/AKT1. Phosphoserine occurs at positions 391 and 450. The region spanning 443–490 is the SARAH domain; it reads FDFLKNLSLEELQMRLKALDPMMEREIEELHQRYSAKRQPILDAMDAK. Residues 448-479 are a coiled coil; it reads NLSLEELQMRLKALDPMMEREIEELHQRYSAK.

The protein belongs to the protein kinase superfamily. STE Ser/Thr protein kinase family. STE20 subfamily. Homodimer; mediated via the coiled-coil region. Interacts with NORE1, which inhibits autoactivation. Interacts with and stabilizes SAV1. Interacts with RAF1, which prevents dimerization and phosphorylation. Interacts with RASSF1. Interacts (via SARAH domain) with isoform 1 of NEK2. Interacts with ESR1 only in the presence of SAV1. Interacts with PKB/AKT1. Forms a tripartite complex with MOBKL1B and STK38. Interacts with RASSF2 (via SARAH domain). Interacts with DLG5 (via PDZ domain 3). Interacts with LATS1; this interaction is inhibited in the presence of DLG5. Interacts with MARK3 in the presence of DLG5. Interacts with RASSF5; this interaction inhibits STK3 autoactivation through heterodimerization. Interacts (when phosphorylated) with SLMAP (via FHA domain); the interaction associates STK3 with the STRIPAK complex. Requires Mg(2+) as cofactor. Autophosphorylated on two residues Thr-174 and Thr-180, leading to activation. Phosphorylation at Thr-117 and Thr-390 by PKB/AKT1, leads to inhibition of its: cleavage, kinase activity, autophosphorylation at Thr-180, binding to RASSF1 and nuclear translocation, and increase in its binding to RAF1. Phosphorylated at Ser-15 by PLK1, leading to activation. In terms of processing, proteolytically cleaved by caspase-3 during apoptosis. Proteolytic cleavage results in kinase activation and nuclear translocation of the truncated form (MST1/N). Post-translationally, ubiquitinated by TRIM69; leading to its redistribution to the perinuclear cytoskeleton.

Its subcellular location is the cytoplasm. The protein resides in the nucleus. The enzyme catalyses L-seryl-[protein] + ATP = O-phospho-L-seryl-[protein] + ADP + H(+). It carries out the reaction L-threonyl-[protein] + ATP = O-phospho-L-threonyl-[protein] + ADP + H(+). Inhibited by the C-terminal non-catalytic region. Activated by caspase-cleavage. Full activation also requires homodimerization and autophosphorylation of Thr-180, which are inhibited by the proto-oncogene product RAF1. Activated by RASSF1 which acts by preventing its dephosphorylation. When autophosphorylated at Thr-180, recruits STRIPAK complex and promotes PP2A-mediated dephosphorylation and inactivation of STK3. Stress-activated, pro-apoptotic kinase which, following caspase-cleavage, enters the nucleus and induces chromatin condensation followed by internucleosomal DNA fragmentation. Key component of the Hippo signaling pathway which plays a pivotal role in organ size control and tumor suppression by restricting proliferation and promoting apoptosis. The core of this pathway is composed of a kinase cascade wherein STK3/MST2 and STK4/MST1, in complex with its regulatory protein SAV1, phosphorylates and activates LATS1/2 in complex with its regulatory protein MOB1, which in turn phosphorylates and inactivates YAP1 oncoprotein and WWTR1/TAZ. Phosphorylation of YAP1 by LATS2 inhibits its translocation into the nucleus to regulate cellular genes important for cell proliferation, cell death, and cell migration. STK3/MST2 and STK4/MST1 are required to repress proliferation of mature hepatocytes, to prevent activation of facultative adult liver stem cells (oval cells), and to inhibit tumor formation. Phosphorylates NKX2-1. Phosphorylates NEK2 and plays a role in centrosome disjunction by regulating the localization of NEK2 to centrosomes, and its ability to phosphorylate CROCC and CEP250. In conjunction with SAV1, activates the transcriptional activity of ESR1 through the modulation of its phosphorylation. Positively regulates RAF1 activation via suppression of the inhibitory phosphorylation of RAF1 on 'Ser-259'. Phosphorylates MOBKL1A and RASSF2. Phosphorylates MOBKL1B on 'Thr-74'. Acts cooperatively with MOBKL1B to activate STK38. This is Serine/threonine-protein kinase 3 (Stk3) from Mus musculus (Mouse).